We begin with the raw amino-acid sequence, 425 residues long: MKTTAKLSFMMFVEWFIWGAWFVPLWLWLSKSGFSAGEIGWSYACTAIAAILSPILVGSITDRFFSAQKVLAVLMFAGALLMYFAAQQTTFAGFFPLLLAYSLTYMPTIALTNSIAFANVPDVERDFPRIRVMGTIGWIASGLACGFLPQILGYADISPTNIPLLITAGSSALLGVFAFFLPDTPPKSTGKMDIKVMLGLDALILLRDKNFLVFFFCSFLFAMPLAFYYIFANGYLTEVGMKNATGWMTLGQFSEIFFMLALPFFTKRFGIKKVLLLGLVTAAIRYGFFIYGSADEYFTYALLFLGILLHGVSYDFYYVTAYIYVDKKAPVHMRTAAQGLITLCCQGFGSLLGYRLGGVMMEKMFAYQEPVNGLTFNWSGMWTFGAVMIAIIAVLFMIFFRESDNEITAIKVDDRDIALTQGEVK.

Residues 1-8 lie on the Periplasmic side of the membrane; that stretch reads MKTTAKLS. A helical membrane pass occupies residues 9-29; the sequence is FMMFVEWFIWGAWFVPLWLWL. Over 30–38 the chain is Cytoplasmic; that stretch reads SKSGFSAGE. The helical transmembrane segment at 39–59 threads the bilayer; it reads IGWSYACTAIAAILSPILVGS. The Periplasmic portion of the chain corresponds to 60 to 63; it reads ITDR. Residues 64–84 traverse the membrane as a helical segment; sequence FFSAQKVLAVLMFAGALLMYF. Residues 85–90 are Cytoplasmic-facing; that stretch reads AAQQTT. The chain crosses the membrane as a helical span at residues 91-111; sequence FAGFFPLLLAYSLTYMPTIAL. The Periplasmic segment spans residues 112-131; the sequence is TNSIAFANVPDVERDFPRIR. Residues 132-152 form a helical membrane-spanning segment; sequence VMGTIGWIASGLACGFLPQIL. The Cytoplasmic segment spans residues 153 to 161; sequence GYADISPTN. Residues 162 to 182 form a helical membrane-spanning segment; it reads IPLLITAGSSALLGVFAFFLP. Residues 183–210 lie on the Periplasmic side of the membrane; sequence DTPPKSTGKMDIKVMLGLDALILLRDKN. Residues 211–231 traverse the membrane as a helical segment; that stretch reads FLVFFFCSFLFAMPLAFYYIF. At 232–244 the chain is on the cytoplasmic side; the sequence is ANGYLTEVGMKNA. A helical membrane pass occupies residues 245–265; the sequence is TGWMTLGQFSEIFFMLALPFF. At 266–287 the chain is on the periplasmic side; the sequence is TKRFGIKKVLLLGLVTAAIRYG. Residues 288–308 traverse the membrane as a helical segment; that stretch reads FFIYGSADEYFTYALLFLGIL. Over 309–339 the chain is Cytoplasmic; the sequence is LHGVSYDFYYVTAYIYVDKKAPVHMRTAAQG. Residues 340–360 form a helical membrane-spanning segment; sequence LITLCCQGFGSLLGYRLGGVM. At 361 to 379 the chain is on the periplasmic side; the sequence is MEKMFAYQEPVNGLTFNWS. A helical transmembrane segment spans residues 380–400; that stretch reads GMWTFGAVMIAIIAVLFMIFF. Residues 401–425 lie on the Cytoplasmic side of the membrane; it reads RESDNEITAIKVDDRDIALTQGEVK.

Belongs to the major facilitator superfamily. Nucleoside:H(+) symporter (NHS) (TC 2.A.1.10) family.

It is found in the cell inner membrane. Functionally, could be involved in nucleoside transport. The chain is Putative nucleoside transporter YegT (yegT) from Escherichia coli (strain K12).